The sequence spans 2053 residues: Cell adhesion molecule DSCAML1 (2053 aa).

The N-terminal stretch at 1-18 is a signal peptide; the sequence is MWLVTFLLLLDSLHKARP. Ig-like C2-type domains lie at 19 to 119, 115 to 217, 226 to 306, 314 to 402, 408 to 501, 506 to 586, 596 to 685, 690 to 784, and 788 to 885; these read EDVG…NIRV, PNIR…ARLS, PTIL…AEAT, PLHV…AIIA, PRIV…ARIN, PSIR…LSIS, PPLI…RQLI, PRFV…MFLT, and PAMI…LTVQ. The Extracellular portion of the chain corresponds to 19-1591; the sequence is EDVGTSLYFV…AQGEGDDVKK (1573 aa). 2 N-linked (GlcNAc...) asparagine glycosylation sites follow: N29 and N79. Cystine bridges form between C47–C103, C146–C198, C247–C294, C336–C386, and C429–C485. Residues N368, N471, N513, N556, N666, N710, N749, N796, and N809 are each glycosylated (N-linked (GlcNAc...) asparagine). Cystine bridges form between C526/C575 and C617/C669. The cysteines at positions 711 and 767 are disulfide-linked. Residues C810 and C867 are joined by a disulfide bond. Fibronectin type-III domains follow at residues 887–984, 989–1088, 1093–1189, and 1193–1288; these read PPDP…TEEA, PPMD…TLED, PPEN…TKED, and PPAG…AGKA. N-linked (GlcNAc...) asparagine glycans are attached at residues N926, N1082, N1144, N1162, N1275, and N1345. Positions 1278 to 1377 constitute an Ig-like C2-type 10 domain; it reads EKVTIEPAGK…TGGFDTIIVN (100 aa). The cysteines at positions 1311 and 1363 are disulfide-linked. Fibronectin type-III domains follow at residues 1383–1477 and 1478–1578; these read PPDQ…THGR and EPSF…TIPP. N1492, N1531, and N1561 each carry an N-linked (GlcNAc...) asparagine glycan. Residues 1592–1612 form a helical membrane-spanning segment; that stretch reads LFTIGCPVILATLGVALLFIV. Residues 1613-2053 lie on the Cytoplasmic side of the membrane; it reads RKKRKEKRLK…GAYSKSYTLV (441 aa). Disordered stretches follow at residues 1715 to 1741, 1773 to 1803, 1840 to 1862, and 1974 to 2053; these read PLIDMSDIRPGTNPVSRKNVKSAHSTR, HGVTVTESDSYSASLSQDTDKGRNSMVSTES, SSDQMTTGTNENADSMTSMSTPS, and LAMP…YTLV. The span at 1732–1741 shows a compositional bias: basic residues; that stretch reads KNVKSAHSTR. A compositionally biased stretch (polar residues) spans 1773–1789; the sequence is HGVTVTESDSYSASLSQ. The span at 1977-2009 shows a compositional bias: pro residues; the sequence is PAPPAGTAPPAPGPTPAEPPTAPSAAPPAPSTE. A compositionally biased stretch (polar residues) spans 2029–2041; sequence EMSTSGVGRSQKQ.

In terms of assembly, homodimer; mediates homophilic interactions to promote cell adhesion. As to expression, detected in heart, liver, pancreas, skeletal muscle, kidney and in brain, in particular in the amygdala, caudate nucleus, corpus callosum, hippocampus, substantia nigra, thalamus and subthalamus.

It is found in the cell membrane. The protein resides in the synapse. Cell adhesion molecule that plays a role in neuronal self-avoidance. Promotes repulsion between specific neuronal processes of either the same cell or the same subtype of cells. Promotes both isoneuronal self-avoidance for creating an orderly neurite arborization in retinal rod bipolar cells and heteroneuronal self-avoidance to maintain mosaic spacing between AII amacrine cells. Adhesion molecule that promotes lamina-specific synaptic connections in the retina: expressed in specific subsets of interneurons and retinal ganglion cells (RGCs) and promotes synaptic connectivity via homophilic interactions. This Homo sapiens (Human) protein is Cell adhesion molecule DSCAML1 (DSCAML1).